A 137-amino-acid chain; its full sequence is Phosphoribosyl-ATP pyrophosphatase (137 aa).

The span at 114–124 shows a compositional bias: basic and acidic residues; sequence EGTSGIEEKAL. The tract at residues 114-137 is disordered; that stretch reads EGTSGIEEKALRKSLQRAAEEAQP.

It belongs to the PRA-PH family.

It localises to the cytoplasm. It carries out the reaction 1-(5-phospho-beta-D-ribosyl)-ATP + H2O = 1-(5-phospho-beta-D-ribosyl)-5'-AMP + diphosphate + H(+). The protein operates within amino-acid biosynthesis; L-histidine biosynthesis; L-histidine from 5-phospho-alpha-D-ribose 1-diphosphate: step 2/9. This is Phosphoribosyl-ATP pyrophosphatase from Paracidovorax citrulli (strain AAC00-1) (Acidovorax citrulli).